Here is a 352-residue protein sequence, read N- to C-terminus: Ion-translocating oxidoreductase complex subunit D (352 aa).

4 helical membrane passes run 20–40, 42–62, 69–91, and 123–143; these read IMLL…WFFG, GTLF…AIVL, VASH…SIPP, and PAMI…TSWL. Residue T187 is modified to FMN phosphoryl threonine. Transmembrane regions (helical) follow at residues 215–235, 242–262, 267–287, 301–321, and 322–342; these read LAGV…VFLL, WHIP…GWLF, LASP…FFIL, LIFG…GGYP, and DGVA…DYYT.

It belongs to the NqrB/RnfD family. As to quaternary structure, the complex is composed of six subunits: RsxA, RsxB, RsxC, RsxD, RsxE and RsxG. Requires FMN as cofactor.

It is found in the cell inner membrane. Part of a membrane-bound complex that couples electron transfer with translocation of ions across the membrane. Required to maintain the reduced state of SoxR. In Salmonella paratyphi A (strain ATCC 9150 / SARB42), this protein is Ion-translocating oxidoreductase complex subunit D.